A 238-amino-acid polypeptide reads, in one-letter code: uncharacterized protein (238 aa).

The segment at 1-20 (MPNLHSLPLGTRPENAIRNN) is disordered.

This sequence belongs to the PEP2 family.

This is an uncharacterized protein from Emericella nidulans (strain FGSC A4 / ATCC 38163 / CBS 112.46 / NRRL 194 / M139) (Aspergillus nidulans).